The primary structure comprises 265 residues: Gap junction beta-4 protein (265 aa).

An intramembrane segment occupies 2 to 13 (NWGFLQGILSGV). The Cytoplasmic portion of the chain corresponds to 14 to 20 (NKYSTAL). Residues 21–40 (GRIWLSVVFIFRVLVYVVAA) form a helical membrane-spanning segment. The Extracellular segment spans residues 41-73 (EEVWDDEQKDFICNTKQPGCPNVCYDEFFPVSH). 3 disulfide bridges follow: C53-C175, C60-C169, and C64-C164. The helical transmembrane segment at 74 to 94 (VRLWALQLILVTCPSLLVVMH) threads the bilayer. The Cytoplasmic portion of the chain corresponds to 95–130 (VAYREERERKHRLKHGPDAPALYSNLSKKRGGLWWT). A helical transmembrane segment spans residues 131–151 (YLLSLIFKAAVDSGFLYIFHC). Over 152–184 (IYKDYDMPRVVACSVQPCPHTVDCYISRPTEKK) the chain is Extracellular. A helical transmembrane segment spans residues 185 to 205 (VFTYFMVVTAAICILLNLSEV). Over 206–265 (AYLVGKRCMEVFRPRRQKTSRRHQLPDTCPPYVISKGHPQDESTVLTKAGMATVDAGVYP) the chain is Cytoplasmic.

The protein belongs to the connexin family. Beta-type (group I) subfamily. In terms of assembly, a hemichannel or connexon is composed of a hexamer of connexins. A functional gap junction is formed by the apposition of two hemichannels. Forms heteromeric channels with GJB2. As to expression, detected in adult heart, kidney, skin and cochlea, where it is detected in spiral ganglion, stria vascularis, spiral limbus and spiral ligament (at protein level).

It is found in the cell membrane. The protein localises to the cell junction. It localises to the gap junction. In terms of biological role, structural component of gap junctions. Gap junctions are dodecameric channels that connect the cytoplasm of adjoining cells. They are formed by the docking of two hexameric hemichannels, one from each cell membrane. Small molecules and ions diffuse from one cell to a neighboring cell via the central pore. The protein is Gap junction beta-4 protein (Gjb4) of Rattus norvegicus (Rat).